A 494-amino-acid polypeptide reads, in one-letter code: Amidophosphoribosyltransferase (494 aa).

Residues 1 to 10 constitute a propeptide that is removed on maturation; it reads MSNYSGLNEE. Cys11 serves as the catalytic Nucleophile. In terms of domain architecture, Glutamine amidotransferase type-2 spans 11 to 231; sequence CGVFGIWNHP…AGEYVVITDE (221 aa). Residues Ser294, Asp356, and Asp357 each contribute to the Mg(2+) site.

In the C-terminal section; belongs to the purine/pyrimidine phosphoribosyltransferase family. Mg(2+) is required as a cofactor.

It catalyses the reaction 5-phospho-beta-D-ribosylamine + L-glutamate + diphosphate = 5-phospho-alpha-D-ribose 1-diphosphate + L-glutamine + H2O. The protein operates within purine metabolism; IMP biosynthesis via de novo pathway; N(1)-(5-phospho-D-ribosyl)glycinamide from 5-phospho-alpha-D-ribose 1-diphosphate: step 1/2. In terms of biological role, catalyzes the formation of phosphoribosylamine from phosphoribosylpyrophosphate (PRPP) and glutamine. This is Amidophosphoribosyltransferase from Staphylococcus epidermidis (strain ATCC 35984 / DSM 28319 / BCRC 17069 / CCUG 31568 / BM 3577 / RP62A).